The following is a 382-amino-acid chain: Lycopene beta-cyclase (382 aa).

Residue Asp6 to Asp36 coordinates NAD(+).

Belongs to the lycopene cyclase family. FAD is required as a cofactor.

Its subcellular location is the cell inner membrane. The catalysed reaction is a carotenoid psi-end group = a carotenoid beta-end derivative. The enzyme catalyses all-trans-lycopene = gamma-carotene. It carries out the reaction gamma-carotene = all-trans-beta-carotene. It catalyses the reaction all-trans-neurosporene = beta-zeacarotene. The catalysed reaction is beta-zeacarotene = 7,8-dihydro-beta-carotene. It functions in the pathway carotenoid biosynthesis; beta-carotene biosynthesis. With respect to regulation, activity is increased in the presence of NAD(P)H. NADPH is not involved directly in the cyclization reaction, but must play an indirect role, e.g. as an allosteric activator. In terms of biological role, catalyzes the double cyclization reaction which converts lycopene to beta-carotene. Also catalyzes the double cyclization reaction which converts neurosporene to 7,8-dihydro-beta-carotene via monocyclic beta-zeacarotene. May also convert zeta-carotene to bicyclic 7,8,7',8'-tetrahydro-beta-carotene. The protein is Lycopene beta-cyclase of Pantoea ananas (Erwinia uredovora).